A 346-amino-acid chain; its full sequence is MNPYVRAIITSGLILGPIITMSSNHWITAWCGLEMNSLTMIPLIANKYQPRAIEASTKYFLTQAMASYLMLSAALMNMWYYGQWDMQLLTDNISCTTMTVAMSIKLAAAPFHFWFPEVLQGATVLTALLLTTWQKLAPLTILVQCSQNLDTTLLIALGMTSILIGGWGGLNQTQIRKIMAFSSIAHLGWMYAILTLSPKILLLTFYLYVAMTATTFLMINVLQTNNMSAIMISWTKTPFMNTMMLLNLMSLAGLPPLTGFAPKWLILQEFTKQRLSMFASMMITSSLLSLYFYLRMSYYTIITLPPTTCNYPLQWRLMTNIHTALATITPLATALMPLLPTLKAIP.

A run of 9 helical transmembrane segments spans residues 7-27 (AIIT…NHWI), 59-79 (YFLT…MNMW), 93-115 (ISCT…HFWF), 151-171 (TTLL…GGLN), 178-198 (IMAF…TLSP), 200-220 (ILLL…LMIN), 242-262 (TMML…GFAP), 275-294 (LSMF…YFYL), and 325-345 (LATI…LKAI).

The protein belongs to the complex I subunit 2 family.

The protein resides in the mitochondrion inner membrane. The catalysed reaction is a ubiquinone + NADH + 5 H(+)(in) = a ubiquinol + NAD(+) + 4 H(+)(out). Functionally, core subunit of the mitochondrial membrane respiratory chain NADH dehydrogenase (Complex I) that is believed to belong to the minimal assembly required for catalysis. Complex I functions in the transfer of electrons from NADH to the respiratory chain. The immediate electron acceptor for the enzyme is believed to be ubiquinone. In Pelomedusa subrufa (African side-necked turtle), this protein is NADH-ubiquinone oxidoreductase chain 2 (MT-ND2).